We begin with the raw amino-acid sequence, 687 residues long: Threonine--tRNA ligase (687 aa).

The region spanning 1 to 67 is the TGS domain; sequence MAHLIEAAPN…EQDSKFTPVP (67 aa). A catalytic region spans residues 266–572; the sequence is DHRRLGAELD…LLEHYAGAFP (307 aa). Zn(2+) contacts are provided by Cys-371, His-422, and His-549.

It belongs to the class-II aminoacyl-tRNA synthetase family. As to quaternary structure, homodimer. Zn(2+) serves as cofactor.

The protein localises to the cytoplasm. It catalyses the reaction tRNA(Thr) + L-threonine + ATP = L-threonyl-tRNA(Thr) + AMP + diphosphate + H(+). Catalyzes the attachment of threonine to tRNA(Thr) in a two-step reaction: L-threonine is first activated by ATP to form Thr-AMP and then transferred to the acceptor end of tRNA(Thr). Also edits incorrectly charged L-seryl-tRNA(Thr). The chain is Threonine--tRNA ligase from Corynebacterium diphtheriae (strain ATCC 700971 / NCTC 13129 / Biotype gravis).